Consider the following 428-residue polypeptide: MTQLEEARKGVVTEEMKFIAEREGIDAEKLRRNVAKGYTVIFRNVRHDWVKPVAVGAGVRVKVNANIGTSRDIVDVKAEIEKAKVAVKYGADTIMDLSTGGDLDEIRKTIMHAVDVPVGTVPIYQAAEEMLAKGKAIIEMSEEDMWRAVEKHFKDGVDYTTIHVGVTKEVVEKMKRTKRAVGMVSRGGTFLAAWILHWGEENPFYKDYDYLLELAREYDVVLSLGDGLRPGGLPDAGDELQIAELYTLGRLVRRAREAGVQTMVEGPGHVPIDQIAAQVKLAKVATDNAPFYVLGPIVTDIFPGYDHITAAIGGAIAALNGADFLCYVTPAEHLGLPDVEHVRQGVIAAKIAAHAVNLTRFEADFKKDYLMALARGKLNWARQFELSMDKERFVEIRKERPTKTEACSMCGDLCAIKLINDMLAGERK.

Residues Asn-66, Met-95, Tyr-124, His-163, 185–187 (SRG), 226–229 (DGLR), and Glu-265 each bind substrate. Residue His-269 coordinates Zn(2+). Substrate is bound at residue Tyr-292. Position 333 (His-333) interacts with Zn(2+). [4Fe-4S] cluster-binding residues include Cys-407, Cys-410, and Cys-414.

This sequence belongs to the ThiC family. [4Fe-4S] cluster serves as cofactor.

It catalyses the reaction 5-amino-1-(5-phospho-beta-D-ribosyl)imidazole + S-adenosyl-L-methionine = 4-amino-2-methyl-5-(phosphooxymethyl)pyrimidine + CO + 5'-deoxyadenosine + formate + L-methionine + 3 H(+). Its pathway is cofactor biosynthesis; thiamine diphosphate biosynthesis. Its function is as follows. Catalyzes the synthesis of the hydroxymethylpyrimidine phosphate (HMP-P) moiety of thiamine from aminoimidazole ribotide (AIR) in a radical S-adenosyl-L-methionine (SAM)-dependent reaction. The chain is Phosphomethylpyrimidine synthase from Thermococcus kodakarensis (strain ATCC BAA-918 / JCM 12380 / KOD1) (Pyrococcus kodakaraensis (strain KOD1)).